The following is a 344-amino-acid chain: Protein L-Myc-1-B (344 aa).

Composition is skewed to polar residues over residues 104 to 113 and 213 to 223; these read GSPRVTNTQK and NTMSPQHNFHS. Disordered stretches follow at residues 104–162 and 208–271; these read GSPR…EDEI and LPPE…YLER. Residues 259–270 show a composition bias toward basic and acidic residues; the sequence is DLAKRKNHNYLE. In terms of domain architecture, bHLH spans 261-313; the sequence is AKRKNHNYLERKRRNDLRSRFLALREEVPSLSRSTKTPKVVVLSKATEFLKGL. The segment at 313-341 is leucine-zipper; sequence LVIQEQQLTAEKLKLWSRHQQLLRRISQL.

As to quaternary structure, efficient DNA binding requires dimerization with another bHLH protein. Binds DNA as a heterodimer with MAX. In terms of tissue distribution, high levels in oocytes, modest levels in kidney and low levels in spleen.

It localises to the nucleus. The protein is Protein L-Myc-1-B (mycl1-b) of Xenopus laevis (African clawed frog).